The chain runs to 240 residues: uncharacterized protein (240 aa).

Residues 26–52 (DYVDDGESLPTRQSVKNQREQKKKQGK) are disordered. The helical transmembrane segment at 57-77 (LFTVLAVIFVFVPVIVLVTLF) threads the bilayer. Residues 100 to 185 (KYEVVPKSED…QPAEPVQNVP (86 aa)) form a disordered region. A compositionally biased stretch (basic and acidic residues) spans 103–159 (VVPKSEDKNDTADTKETALQKESKKEPEDSKPKEQTAADKKQTAVAEKEDSPNKEEA). Residues 160-185 (TAAAASSSQSTVQQQEQPAEPVQNVP) are compositionally biased toward low complexity. Residues 189 to 235 (VKHTVQKKETLYRISMKYYKSRTGEEKIRAYNHLNGNDVYTGQVLDI) form the LysM domain.

Its subcellular location is the membrane. This is an uncharacterized protein from Bacillus subtilis (strain 168).